A 150-amino-acid chain; its full sequence is Natriuretic peptides A (150 aa).

The N-terminal stretch at 1 to 24 (MSSFTITVSFLLVLVFQFPGQTRA) is a signal peptide. 2 propeptides span residues 25 to 122 (NPVY…AAPR) and 92 to 102 (DGGALGRGPWD). Positions 77-100 (LEVPPWTGEVNPAQRDGGALGRGP) are disordered. Phosphoserine is present on Ser-128. Cys-129 and Cys-145 are joined by a disulfide.

Belongs to the natriuretic peptide family. As to quaternary structure, homodimer; disulfide-linked antiparallel dimer. In terms of processing, the precursor molecule is proteolytically cleaved by CORIN at Arg-122 to produce the atrial natriuretic peptide. Undergoes further proteolytic cleavage by unknown proteases to give rise to long-acting natriuretic peptide, vessel dilator and kaliuretic peptide. Additional processing gives rise to the auriculin and atriopeptin peptides. In the kidneys, alternative processing by an unknown protease results in the peptide urodilatin. Post-translationally, cleavage by MME initiates degradation of the factor and thereby regulates its activity. Degradation by IDE results in reduced activation of NPR1 (in vitro). During IDE degradation, the resulting products can temporarily stimulate NPR2 to produce cGMP, before the fragments are completely degraded and inactivated by IDE (in vitro). Degraded by IDE. In terms of processing, phosphorylation on Ser-128 decreases vasorelaxant activity. As to expression, brain (at protein level).

The protein localises to the secreted. Its subcellular location is the perikaryon. It localises to the cell projection. In terms of biological role, hormone that plays a key role in mediating cardio-renal homeostasis, and is involved in vascular remodeling and regulating energy metabolism. Acts by specifically binding and stimulating NPR1 to produce cGMP, which in turn activates effector proteins, such as PRKG1, that drive various biological responses. Regulates vasodilation, natriuresis, diuresis and aldosterone synthesis and is therefore essential for regulating blood pressure, controlling the extracellular fluid volume and maintaining the fluid-electrolyte balance. Also involved in inhibiting cardiac remodeling and cardiac hypertrophy by inducing cardiomyocyte apoptosis and attenuating the growth of cardiomyocytes and fibroblasts. Plays a role in female pregnancy by promoting trophoblast invasion and spiral artery remodeling in uterus, and thus prevents pregnancy-induced hypertension. In adipose tissue, acts in various cGMP- and PKG-dependent pathways to regulate lipid metabolism and energy homeostasis. This includes up-regulating lipid metabolism and mitochondrial oxygen utilization by activating the AMP-activated protein kinase (AMPK), and increasing energy expenditure by acting via MAPK11 to promote the UCP1-dependent thermogenesis of brown adipose tissue. Binds the clearance receptor NPR3 which removes the hormone from circulation. May have a role in cardio-renal homeostasis through regulation of natriuresis, diuresis, vasodilation, and inhibiting aldosterone synthesis. In vitro, promotes the production of cGMP and induces vasodilation. May promote natriuresis, at least in part, by enhancing prostaglandin E2 synthesis resulting in the inhibition of renal Na+-K+-ATPase. However reports on the involvement of this peptide in mammal blood volume and blood pressure homeostasis are conflicting; according to a report, in vivo it is not sufficient to activate cGMP and does not inhibit collecting duct transport nor effect diuresis and natriuresis. Appears to bind to specific receptors that are distinct from the receptors bound by atrial natriuretic peptide and vessel dilator. Possibly enhances protein excretion in urine by decreasing proximal tubular protein reabsorption. Functionally, may have a role in cardio-renal homeostasis through regulation of natriuresis, diuresis, and vasodilation. In vitro, promotes the production of cGMP and induces vasodilation. May promote natriuresis, at least in part, by enhancing prostaglandin E2 synthesis resulting in the inhibition of renal Na+-K+-ATPase. However reports on the involvement of this peptide in mammal blood volume and blood pressure homeostasis are conflicting; according to a report it is not sufficient to activate cGMP and does not inhibit collecting duct transport nor effect diuresis and natriuresis. Appears to bind to specific receptors that are distinct from the receptors bound by the atrial natriuretic and long-acting natriuretic peptides. Possibly functions in protein excretion in urine by maintaining the integrity of the proximal tubules and enhancing protein excretion by decreasing proximal tubular protein reabsorption. Its function is as follows. May have a role in cardio-renal homeostasis through regulation of diuresis and inhibiting aldosterone synthesis. In vitro, promotes the production of cGMP and induces vasodilation. May promote natriuresis, at least in part, by enhancing prostaglandin E2 synthesis resulting in the inhibition of renal Na+-K+-ATPase. May have a role in potassium excretion but not sodium excretion (natriuresis). Possibly enhances protein excretion in urine by decreasing proximal tubular protein reabsorption. In terms of biological role, hormone produced in the kidneys that appears to be important for maintaining cardio-renal homeostasis. Mediates vasodilation, natriuresis and diuresis primarily in the renal system, in order to maintain the extracellular fluid volume and control the fluid-electrolyte balance. Specifically binds and stimulates cGMP production by renal transmembrane receptors, likely NPR1. Urodilatin not ANP, may be the natriuretic peptide responsible for the regulation of sodium and water homeostasis in the kidney. May have a role in cardio-renal homeostasis through regulation of natriuresis and vasodilation. In vivo promotes natriuresis and in vitro, vasodilates renal artery strips. Functionally, may have a role in cardio-renal homeostasis through regulation of regulation of natriuresis and vasodilation. In vivo promotes natriuresis. In vitro, vasodilates intestinal smooth muscle but not smooth muscle strips. Its function is as follows. May have a role in cardio-renal homeostasis through regulation of natriuresis and vasodilation. In vivo promotes natriuresis. In vitro, selectively vasodilates intestinal and vascular smooth muscle strips. In terms of biological role, may have a role in cardio-renal homeostasis through regulation of natriuresis and vasodilation. In vivo promotes natriuresis. In vitro, selectively vasodilates intestinal smooth muscle but not vascular smooth muscle strips. In Sus scrofa (Pig), this protein is Natriuretic peptides A (NPPA).